Consider the following 282-residue polypeptide: MSGLRTLLGLGLLVAGSRLPRIASRQSVCRAGPIWWGTQHRSSETMASAAVKYLSQEEAQAVDEELFNEYQFSVDQLMELAGLSCATAIAKAYPPTSMSKSPPTVLVICGPGNNGGDGLVCARHLKLFGYQPTIYYPKRPNKPLFTGLVTQCQKMDIPFLGEMPPEPMMVDELYELVVDAIFGFSFKGDVREPFHSILSVLSGLTVPIASIDIPSGWDVEKGNPSGIQPDLLISLTAPKKSATQFTGRYHYLGGRFVPPALEKKYQLNLPAYPDTECVYRLQ.

The N-terminal 53 residues, 1–53 (MSGLRTLLGLGLLVAGSRLPRIASRQSVCRAGPIWWGTQHRSSETMASAAVKY), are a transit peptide targeting the mitochondrion. Residues 59–269 (AQAVDEELFN…ALEKKYQLNL (211 aa)) form the YjeF N-terminal domain. Position 113 to 117 (113 to 117 (NNGGD)) interacts with (6S)-NADPHX. N114 is a binding site for K(+). Position 138 is an N6-succinyllysine (K138). A K(+)-binding site is contributed by D179. (6S)-NADPHX contacts are provided by residues 183–189 (GFSFKGD) and D212. S215 lines the K(+) pocket.

Belongs to the NnrE/AIBP family. In terms of assembly, homodimer. Interacts with APOA1 and APOA2. It depends on K(+) as a cofactor. Post-translationally, undergoes physiological phosphorylation during sperm capacitation, downstream to PKA activation.

It is found in the mitochondrion. The protein localises to the secreted. The catalysed reaction is (6R)-NADHX = (6S)-NADHX. The enzyme catalyses (6R)-NADPHX = (6S)-NADPHX. Its function is as follows. Catalyzes the epimerization of the S- and R-forms of NAD(P)HX, a damaged form of NAD(P)H that is a result of enzymatic or heat-dependent hydration. This is a prerequisite for the S-specific NAD(P)H-hydrate dehydratase to allow the repair of both epimers of NAD(P)HX. Accelerates cholesterol efflux from endothelial cells to high-density lipoprotein (HDL) and thereby regulates angiogenesis. The protein is NAD(P)H-hydrate epimerase of Rattus norvegicus (Rat).